Reading from the N-terminus, the 1170-residue chain is DNA-directed RNA polymerase subunit beta' (1170 aa).

The Zn(2+) site is built by cysteine 60, cysteine 62, cysteine 75, and cysteine 78. The Mg(2+) site is built by aspartate 449, aspartate 451, and aspartate 453. Residues cysteine 774, cysteine 848, cysteine 855, and cysteine 858 each contribute to the Zn(2+) site. Residues 1145 to 1170 (EPGEENGEPGGERLYGMDELYGETAN) are disordered.

This sequence belongs to the RNA polymerase beta' chain family. The RNAP catalytic core consists of 2 alpha, 1 beta, 1 beta' and 1 omega subunit. When a sigma factor is associated with the core the holoenzyme is formed, which can initiate transcription. Mg(2+) serves as cofactor. Zn(2+) is required as a cofactor.

It catalyses the reaction RNA(n) + a ribonucleoside 5'-triphosphate = RNA(n+1) + diphosphate. Its function is as follows. DNA-dependent RNA polymerase catalyzes the transcription of DNA into RNA using the four ribonucleoside triphosphates as substrates. In Pelotomaculum thermopropionicum (strain DSM 13744 / JCM 10971 / SI), this protein is DNA-directed RNA polymerase subunit beta'.